The following is a 654-amino-acid chain: Macrolide export ATP-binding/permease protein MacB (654 aa).

The ABC transporter domain maps to 6-244 (IELRGLRREF…RAGDAPTRQP (239 aa)). Residue 42–49 (GASGSGKS) participates in ATP binding. 4 consecutive transmembrane segments (helical) span residues 278 to 298 (FLTM…VAVG), 527 to 547 (LTLM…IGVM), 584 to 604 (VVCL…AALF), and 619 to 639 (SIAA…YLPA).

It belongs to the ABC transporter superfamily. Macrolide exporter (TC 3.A.1.122) family. As to quaternary structure, homodimer.

It is found in the cell inner membrane. Its function is as follows. Non-canonical ABC transporter that contains transmembrane domains (TMD), which form a pore in the inner membrane, and an ATP-binding domain (NBD), which is responsible for energy generation. Confers resistance against macrolides. The chain is Macrolide export ATP-binding/permease protein MacB from Rhodopseudomonas palustris (strain HaA2).